We begin with the raw amino-acid sequence, 126 residues long: uncharacterized protein (126 aa).

This is an uncharacterized protein from Saccharomyces cerevisiae (strain ATCC 204508 / S288c) (Baker's yeast).